We begin with the raw amino-acid sequence, 114 residues long: Large ribosomal subunit protein uL22 (114 aa).

It belongs to the universal ribosomal protein uL22 family. In terms of assembly, part of the 50S ribosomal subunit.

This protein binds specifically to 23S rRNA; its binding is stimulated by other ribosomal proteins, e.g. L4, L17, and L20. It is important during the early stages of 50S assembly. It makes multiple contacts with different domains of the 23S rRNA in the assembled 50S subunit and ribosome. In terms of biological role, the globular domain of the protein is located near the polypeptide exit tunnel on the outside of the subunit, while an extended beta-hairpin is found that lines the wall of the exit tunnel in the center of the 70S ribosome. In Streptococcus mutans serotype c (strain ATCC 700610 / UA159), this protein is Large ribosomal subunit protein uL22.